Consider the following 230-residue polypeptide: U2 small nuclear ribonucleoprotein A' (230 aa).

LRR repeat units follow at residues 19–40 (KDRE…PFFP), 41–62 (RLRM…LANS), and 65–86 (GLTT…DPLR). Positions 99–137 (NPVTRKEYYRLWIIWRIPSVRFLDYQKVKDAERAKAAEL) constitute an LRRCT domain. Residues 211–230 (GRIPGGALDGAGNDGDQMQL) are disordered. The span at 213 to 223 (IPGGALDGAGN) shows a compositional bias: gly residues.

The protein belongs to the U2 small nuclear ribonucleoprotein A family. In terms of assembly, associated with the spliceosome.

The protein resides in the nucleus. Involved in pre-mRNA splicing. The sequence is that of U2 small nuclear ribonucleoprotein A' (lea1) from Emericella nidulans (strain FGSC A4 / ATCC 38163 / CBS 112.46 / NRRL 194 / M139) (Aspergillus nidulans).